We begin with the raw amino-acid sequence, 61 residues long: MDPNCSCAAGGSCTCAGSCKCKECRCTSCKKSCCSCCPVGCAKCAQGCICKGASDKCSCCA.

Residue Met-1 is modified to N-acetylmethionine. A beta region spans residues 1-29 (MDPNCSCAAGGSCTCAGSCKCKECRCTSC). Residues Cys-5, Cys-7, Cys-13, Cys-15, Cys-19, Cys-21, Cys-24, Cys-26, Cys-29, Cys-33, Cys-34, Cys-36, Cys-37, Cys-41, Cys-44, Cys-48, Cys-50, and Cys-57 each coordinate a divalent metal cation. The alpha stretch occupies residues 30–61 (KKSCCSCCPVGCAKCAQGCICKGASDKCSCCA). Ser-58 is modified (phosphoserine). A divalent metal cation contacts are provided by Cys-59 and Cys-60.

It belongs to the metallothionein superfamily. Type 1 family. Interacts with EOLA1.

Functionally, metallothioneins have a high content of cysteine residues that bind various heavy metals; these proteins are transcriptionally regulated by both heavy metals and glucocorticoids. The polypeptide is Metallothionein-2 (MT2A) (Canis lupus familiaris (Dog)).